Reading from the N-terminus, the 286-residue chain is Release factor glutamine methyltransferase (286 aa).

S-adenosyl-L-methionine contacts are provided by residues 122–126, Asp-145, Trp-173, and Asn-188; that span reads GTGTG. Residue 188–191 participates in substrate binding; sequence NPPY.

It belongs to the protein N5-glutamine methyltransferase family. PrmC subfamily.

The catalysed reaction is L-glutaminyl-[peptide chain release factor] + S-adenosyl-L-methionine = N(5)-methyl-L-glutaminyl-[peptide chain release factor] + S-adenosyl-L-homocysteine + H(+). Methylates the class 1 translation termination release factors RF1/PrfA and RF2/PrfB on the glutamine residue of the universally conserved GGQ motif. The chain is Release factor glutamine methyltransferase from Shewanella oneidensis (strain ATCC 700550 / JCM 31522 / CIP 106686 / LMG 19005 / NCIMB 14063 / MR-1).